Here is a 162-residue protein sequence, read N- to C-terminus: Autophagy-related protein 8 (162 aa).

Basic and acidic residues predominate over residues 1 to 27; the sequence is MRSKFKDEHPFEKRKAEAERIRQKYSD. Positions 1 to 42 are disordered; it reads MRSKFKDEHPFEKRKAEAERIRQKYSDRIPPSPHSPASRLIG. Gly157 is lipidated: Phosphatidylethanolamine amidated glycine. A propeptide spans 158 to 162 (removed in mature form); sequence GFETA.

Belongs to the ATG8 family.

Its subcellular location is the cytoplasmic vesicle. The protein resides in the autophagosome membrane. It localises to the vacuole membrane. Ubiquitin-like modifier involved in autophagosome formation. With ATG4, mediates the delivery of the autophagosomes to the vacuole via the microtubule cytoskeleton. Required for selective autophagic degradation of the nucleus (nucleophagy) as well as for mitophagy which contributes to regulate mitochondrial quantity and quality by eliminating the mitochondria to a basal level to fulfill cellular energy requirements and preventing excess ROS production. Also participates in membrane fusion events that take place in the early secretory pathway. Also involved in endoplasmic reticulum-specific autophagic process and is essential for the survival of cells subjected to severe ER stress. The ATG8-PE conjugate mediates tethering between adjacent membranes and stimulates membrane hemifusion, leading to expansion of the autophagosomal membrane during autophagy. In Colletotrichum higginsianum (strain IMI 349063) (Crucifer anthracnose fungus), this protein is Autophagy-related protein 8.